The sequence spans 477 residues: D(1B) dopamine receptor (477 aa).

Over 1 to 39 (MLPPGSNGTAYPGQFALYQQLAQGNAVGGSAGAPPLGPS) the chain is Extracellular. N-linked (GlcNAc...) asparagine glycosylation occurs at N7. The helical transmembrane segment at 40 to 66 (QVVTACLLTLLIIWTLLGNVLVCAAIV) threads the bilayer. Residues 67–77 (RSRHLRANMTN) lie on the Cytoplasmic side of the membrane. Residues 78–104 (VFIVSLAVSDLFVALLVMPWKAVAEVA) traverse the membrane as a helical segment. Residues 105–114 (GYWPFGAFCD) lie on the Extracellular side of the membrane. A disulfide bond links C113 and C217. A helical transmembrane segment spans residues 115-136 (VWVAFDIMCSTASILNLCVISV). The Cytoplasmic segment spans residues 137 to 158 (DRYWAISRPFRYKRKMTQRMAL). Residues 159 to 180 (VMVGLAWTLSILISFIPVQLNW) traverse the membrane as a helical segment. Residues 181–223 (HRDQAASWGGLDLPNNLANWTPWEEDFWEPDVNAENCDSSLNR) are Extracellular-facing. N-linked (GlcNAc...) asparagine glycosylation occurs at N222. The chain crosses the membrane as a helical span at residues 224–246 (TYAISSSLISFYIPVAIMIVTYT). The Cytoplasmic segment spans residues 247-296 (RIYRIAQVQIRRISSLERAAEHAQSCRSSAACAPDTSLRASIKKETKVLK). The chain crosses the membrane as a helical span at residues 297 to 320 (TLSVIMGVFVCCWLPFFILNCMVP). Residues 321–340 (FCSGHPEGPPAGFPCVSETT) are Extracellular-facing. The helical transmembrane segment at 341–360 (FDVFVWFGWANSSLNPVIYA) threads the bilayer. Over 361–477 (FNADFQKVFA…ITPFTPNGFH (117 aa)) the chain is Cytoplasmic. A lipid anchor (S-palmitoyl cysteine) is attached at C375.

This sequence belongs to the G-protein coupled receptor 1 family. Neuron-specific, localized primarily within limbic regions of the brain.

It is found in the cell membrane. In terms of biological role, dopamine receptor whose activity is mediated by G proteins which activate adenylyl cyclase. The protein is D(1B) dopamine receptor (DRD5) of Homo sapiens (Human).